Reading from the N-terminus, the 397-residue chain is 16-O-methyltransferase bsc6 (397 aa).

Asp-262 contributes to the S-adenosyl-L-methionine binding site. His-302 serves as the catalytic Proton acceptor.

It belongs to the class I-like SAM-binding methyltransferase superfamily. Cation-independent O-methyltransferase family. S-adenosyl-L-methionine serves as cofactor.

Its pathway is mycotoxin biosynthesis. Functionally, 16-O-methyltransferase; part of the gene cluster that mediates the biosynthesis of the diterpene glucoside brassicicene C. In the first step of the brassicicene C biosynthesis, the bifunctional diterpene synthase bsc8 that possesses both prenyl transferase and terpene cyclase activity, converts isopentenyl diphosphate and dimethylallyl diphosphate into geranylgeranyl diphosphate (GGDP) that is further converted into fusicocca-2,10(14)-diene, the first precursor for brassicicene C. Fusicocca-2,10(14)-diene is then substrate of cytochrome P450 monooxygenase bsc1 for hydroxylation at the C-8 position. Oxidation at C-16 position to aldehyde is then catalyzed by the cytochrome P450 monooyxygenase bsc7, yielding fusicocca-2,10(14)-diene-8-beta,16-diol. Follows the isomerization of the double bond and reduction of aldehyde to alcohol catalyzed by the short-chain dehydrogenase/reductase bsc3 to yield the diol compound fusicocca-1,10(14)-diene-8 beta,16-diol. The next step is the oxidation at the C-3 position of fusicocca-2,10(14)-diene-8-beta,16-diol catalyzed by the alpha-ketoglutarate dependent dioxygenase bsc9, to produce a triol compound. Methylation of the hydroxy group at position 16 is performed by the methyltransferase bsc6. 16-O-methylation is followed by oxidation at the C-13 position to ketone and an alkyl shift of the methyl group leads to brassicicene C. Although the probable acetyltransferase bsc4 is included in the gene cluster, no acetylation reactions are necessary for brassicicene C biosynthesis. However, the fact that brassicicene E, which is a structurally related compound having an acetoxy group at position 12, was previously isolated from another strain of A.brassicicola suggests that the ATCC 96836 strain might also produce a small amount of brassicicene E. This is 16-O-methyltransferase bsc6 from Alternaria brassicicola (Dark leaf spot agent).